A 263-amino-acid polypeptide reads, in one-letter code: Alpha-tubulin N-acetyltransferase 2 (263 aa).

Residues 1–181 (MEIAFDLSSI…NKYAVFPNFF (181 aa)) enclose the N-acetyltransferase domain. 115–128 (FFIVPTEQRSGNGF) contributes to the acetyl-CoA binding site. 2 disordered regions span residues 191-224 (TPRQ…RPRH) and 236-263 (FPRG…EPIW). The span at 200–212 (RASSAVSSHTTSR) shows a compositional bias: low complexity. The span at 253–263 (LTRDQRHEPIW) shows a compositional bias: basic and acidic residues.

The protein belongs to the acetyltransferase ATAT1 family.

It carries out the reaction L-lysyl-[alpha-tubulin] + acetyl-CoA = N(6)-acetyl-L-lysyl-[alpha-tubulin] + CoA + H(+). In terms of biological role, specifically acetylates 'Lys-40' in alpha-tubulin/mec-12 on the lumenal side of microtubules. Promotes microtubule destabilization and accelerates microtubule dynamics; this activity may be independent of acetylation activity. Acetylates alpha-tubulin with a slow enzymatic rate, due to a catalytic site that is not optimized for acetyl transfer. Enters the microtubule through each end and diffuses quickly throughout the lumen of microtubules. Acetylates only long/old microtubules because of its slow acetylation rate since it does not have time to act on dynamically unstable microtubules before the enzyme is released. Required for the maintenance of touch receptor neurons and possibly other type of neurons involved in locomotion. The sequence is that of Alpha-tubulin N-acetyltransferase 2 (atat-2) from Caenorhabditis briggsae.